Here is a 140-residue protein sequence, read N- to C-terminus: MPPKAQKTPTTGGKAPAGKAPVEKKEAGKKTAAPSGEKKKRTKTRKETYSSYIYKVLKQVHPDTGISNRAMSILNSFVTTTHIFERVATEASKLAAYNKKSTISSREIQTSVRLILPGELAKHAVSEGTKAVTKYSSSTK.

The disordered stretch occupies residues 1 to 47 (MPPKAQKTPTTGGKAPAGKAPVEKKEAGKKTAAPSGEKKKRTKTRKE). An N6-acetyllysine; alternate modification is found at Lys-7. A Glycyl lysine isopeptide (Lys-Gly) (interchain with G-Cter in SUMO); alternate cross-link involves residue Lys-7. Lys-14 bears the N6-acetyllysine mark. Lys-24 carries the post-translational modification N6-acetyllysine; alternate. A Glycyl lysine isopeptide (Lys-Gly) (interchain with G-Cter in SUMO); alternate cross-link involves residue Lys-24. A Glycyl lysine isopeptide (Lys-Gly) (interchain with G-Cter in SUMO) cross-link involves residue Lys-25. Lys-134 participates in a covalent cross-link: Glycyl lysine isopeptide (Lys-Gly) (interchain with G-Cter in ubiquitin).

The protein belongs to the histone H2B family. In terms of assembly, the nucleosome is a histone octamer containing two molecules each of H2A, H2B, H3 and H4 assembled in one H3-H4 heterotetramer and two H2A-H2B heterodimers. The octamer wraps approximately 147 bp of DNA. In terms of processing, monoubiquitinated by BRE1 to form H2BK123ub1. H2BK123ub1 gives a specific tag for epigenetic transcriptional activation and is also prerequisite for H3K4me and H3K79me formation. H2BK123ub1 also modulates the formation of double-strand breaks during meiosis and is a prerequisite for DNA-damage checkpoint activation. Acetylated by GCN5 to form H2BK11ac and H2BK16ac. H2BK16ac can also be formed by ESA1. Acetylation of N-terminal lysines and particularly formation of H2BK11acK16ac has a positive effect on transcription. Post-translationally, sumoylation to form H2BK6su and probably also H2BK16su or H2BK17su, occurs preferentially near the telomeres and represses gene transcription.

The protein resides in the nucleus. It is found in the chromosome. In terms of biological role, core component of nucleosome. Nucleosomes wrap and compact DNA into chromatin, limiting DNA accessibility to the cellular machineries which require DNA as a template. Histones thereby play a central role in transcription regulation, DNA repair, DNA replication and chromosomal stability. DNA accessibility is regulated via a complex set of post-translational modifications of histones, also called histone code, and nucleosome remodeling. The protein is Histone H2B (HTB1) of Phaeosphaeria nodorum (strain SN15 / ATCC MYA-4574 / FGSC 10173) (Glume blotch fungus).